We begin with the raw amino-acid sequence, 130 residues long: Small ribosomal subunit protein uS9 (130 aa).

The protein belongs to the universal ribosomal protein uS9 family.

This Geotalea uraniireducens (strain Rf4) (Geobacter uraniireducens) protein is Small ribosomal subunit protein uS9.